The following is a 499-amino-acid chain: Alpha-amylase A type-1/2 (499 aa).

A signal peptide spans 1–21 (MMVAWWSLFLYGLQVAAPALA). Cysteine 51 and cysteine 59 are oxidised to a cystine. Residues glutamine 56 and tryptophan 104 each coordinate substrate. Asparagine 142 lines the Ca(2+) pocket. Histidine 143 provides a ligand contact to substrate. Residues cysteine 171 and cysteine 185 are joined by a disulfide bond. 2 residues coordinate Ca(2+): glutamate 183 and aspartate 196. N-linked (GlcNAc...) asparagine glycosylation occurs at asparagine 218. Position 225 (arginine 225) interacts with substrate. Ca(2+) is bound by residues aspartate 227, histidine 231, and glutamate 251. Aspartate 227 functions as the Nucleophile in the catalytic mechanism. Position 230–231 (230–231 (KH)) interacts with substrate. Glutamate 251 (proton donor) is an active-site residue. Glycine 255 contacts substrate. Cysteine 261 and cysteine 304 form a disulfide bridge. Positions 318 and 365 each coordinate substrate. The cysteines at positions 461 and 496 are disulfide-linked.

This sequence belongs to the glycosyl hydrolase 13 family. Monomer. Ca(2+) serves as cofactor.

It is found in the secreted. It catalyses the reaction Endohydrolysis of (1-&gt;4)-alpha-D-glucosidic linkages in polysaccharides containing three or more (1-&gt;4)-alpha-linked D-glucose units.. This is Alpha-amylase A type-1/2 (amy1) from Aspergillus oryzae (strain ATCC 42149 / RIB 40) (Yellow koji mold).